A 127-amino-acid chain; its full sequence is MYRTMMKAKLHRARVTESNLNYVGSITIDEDLMDAVDLLENEKVQIVNNNNGERFETYVIKGPRGEGGICLNGAAARKVQPGDVVIILSYAMMENAEALAHQPKVAILDENNRIVEMLGTEPASTVR.

The active-site Schiff-base intermediate with substrate; via pyruvic acid is the Ser25. A Pyruvic acid (Ser) modification is found at Ser25. Thr57 contributes to the substrate binding site. Catalysis depends on Tyr58, which acts as the Proton donor. 73–75 (GAA) provides a ligand contact to substrate.

The protein belongs to the PanD family. In terms of assembly, heterooctamer of four alpha and four beta subunits. Requires pyruvate as cofactor. Post-translationally, is synthesized initially as an inactive proenzyme, which is activated by self-cleavage at a specific serine bond to produce a beta-subunit with a hydroxyl group at its C-terminus and an alpha-subunit with a pyruvoyl group at its N-terminus.

The protein localises to the cytoplasm. It carries out the reaction L-aspartate + H(+) = beta-alanine + CO2. The protein operates within cofactor biosynthesis; (R)-pantothenate biosynthesis; beta-alanine from L-aspartate: step 1/1. Catalyzes the pyruvoyl-dependent decarboxylation of aspartate to produce beta-alanine. The polypeptide is Aspartate 1-decarboxylase (Shouchella clausii (strain KSM-K16) (Alkalihalobacillus clausii)).